The chain runs to 484 residues: tRNA sulfurtransferase (484 aa).

Residues 63-167 enclose the THUMP domain; that stretch reads ERLVEALKCI…NKDLFIVTQR (105 aa). Residues 185-186, K267, G289, and Q298 each bind ATP; that span reads LM. C346 and C458 are joined by a disulfide. The Rhodanese domain occupies 406-484; sequence IPENAVVVDI…GFKNVKVYRP (79 aa). Residue C458 is the Cysteine persulfide intermediate of the active site.

This sequence belongs to the ThiI family.

The protein resides in the cytoplasm. It catalyses the reaction [ThiI sulfur-carrier protein]-S-sulfanyl-L-cysteine + a uridine in tRNA + 2 reduced [2Fe-2S]-[ferredoxin] + ATP + H(+) = [ThiI sulfur-carrier protein]-L-cysteine + a 4-thiouridine in tRNA + 2 oxidized [2Fe-2S]-[ferredoxin] + AMP + diphosphate. The catalysed reaction is [ThiS sulfur-carrier protein]-C-terminal Gly-Gly-AMP + S-sulfanyl-L-cysteinyl-[cysteine desulfurase] + AH2 = [ThiS sulfur-carrier protein]-C-terminal-Gly-aminoethanethioate + L-cysteinyl-[cysteine desulfurase] + A + AMP + 2 H(+). It participates in cofactor biosynthesis; thiamine diphosphate biosynthesis. Its function is as follows. Catalyzes the ATP-dependent transfer of a sulfur to tRNA to produce 4-thiouridine in position 8 of tRNAs, which functions as a near-UV photosensor. Also catalyzes the transfer of sulfur to the sulfur carrier protein ThiS, forming ThiS-thiocarboxylate. This is a step in the synthesis of thiazole, in the thiamine biosynthesis pathway. The sulfur is donated as persulfide by IscS. The chain is tRNA sulfurtransferase from Colwellia psychrerythraea (strain 34H / ATCC BAA-681) (Vibrio psychroerythus).